A 214-amino-acid chain; its full sequence is Uracil phosphoribosyltransferase (214 aa).

Residues R107 and 135–143 (DPMLATGKT) each bind 5-phospho-alpha-D-ribose 1-diphosphate. Uracil is bound by residues I198 and 203 to 205 (GDA). D204 is a 5-phospho-alpha-D-ribose 1-diphosphate binding site.

The protein belongs to the UPRTase family. The cofactor is Mg(2+).

The catalysed reaction is UMP + diphosphate = 5-phospho-alpha-D-ribose 1-diphosphate + uracil. The protein operates within pyrimidine metabolism; UMP biosynthesis via salvage pathway; UMP from uracil: step 1/1. Allosterically activated by GTP. In terms of biological role, catalyzes the conversion of uracil and 5-phospho-alpha-D-ribose 1-diphosphate (PRPP) to UMP and diphosphate. The sequence is that of Uracil phosphoribosyltransferase from Aeropyrum pernix (strain ATCC 700893 / DSM 11879 / JCM 9820 / NBRC 100138 / K1).